A 676-amino-acid polypeptide reads, in one-letter code: WD repeat-containing protein 48 (676 aa).

Phosphotyrosine is present on Y28. WD repeat units follow at residues 28–67 (YNRN…QDPY), 73–112 (HHTD…CMST), 115–154 (THKD…ALTA), 166–205 (GNKD…KLMK), 208–247 (GHTD…CIAT), 250–289 (VHDE…IRVL), 292–334 (EEKA…NFRA), and 358–397 (KGGA…KVED). The residue at position 214 (K214) is an N6-acetyllysine. K578 is modified (N6-acetyllysine). The interval 607 to 628 (LDNESQTTSSSNNEKPEQEKEE) is disordered. The segment covering 609-619 (NESQTTSSSNN) has biased composition (low complexity). Position 613 is a phosphothreonine (T613).

Belongs to the WD repeat WDR48 family. As to quaternary structure, interacts with USP46. Interacts with USP1. Interacts with USP12. Component of the USP12-WDR20-WDR48 deubiquitinating complex. Component of the USP12-DMWD-WDR48 deubiquitinating complex. Interacts with PHLPP1. Interacts with RAD51AP1; the interaction is direct and promotes formation of a trimeric complex with RAD51 via RAD51AP1. Interacts with ATAD5; the interaction regulates USP1-mediated PCNA deubiquitination. Interacts with RAD51; the interaction is enhanced under replication stress. Interacts with ITCH; the interaction is more efficient when both USP12 and WDR48/UAF1 are involved and may facilitate recruitment of the USP12 deubiquitinating complex to Notch.

Its subcellular location is the nucleus. It is found in the cytoplasm. The protein localises to the lysosome. It localises to the late endosome. Functionally, regulator of deubiquitinating complexes, which acts as a strong activator of USP1, USP12 and USP46. Enhances the USP1-mediated deubiquitination of FANCD2; USP1 being almost inactive by itself. Activates deubiquitination by increasing the catalytic turnover without increasing the affinity of deubiquitinating enzymes for the substrate. Also activates deubiquitinating activity of complexes containing USP12. Docks at the distal end of the USP12 fingers domain and induces a cascade of structural changes leading to the activation of the enzyme. Together with RAD51AP1, promotes DNA repair by stimulating RAD51-mediated homologous recombination. Binds single-stranded DNA (ssDNA) and double-stranded DNA (dsDNA). DNA-binding is required both for USP1-mediated deubiquitination of FANCD2 and stimulation of RAD51-mediated homologous recombination: both WDR48/UAF1 and RAD51AP1 have coordinated role in DNA-binding during these processes. Together with ATAD5 and by regulating USP1 activity, has a role in PCNA-mediated translesion synthesis (TLS) by deubiquitinating monoubiquitinated PCNA. Together with ATAD5, has a role in recruiting RAD51 to stalled forks during replication stress. This Mus musculus (Mouse) protein is WD repeat-containing protein 48 (Wdr48).